A 559-amino-acid chain; its full sequence is NXPE family member 2 (559 aa).

The chain crosses the membrane as a helical span at residues 17–37 (AIARKLLLMLTFILIFWIIYL).

This sequence belongs to the NXPE family.

Its subcellular location is the membrane. The polypeptide is NXPE family member 2 (NXPE2) (Homo sapiens (Human)).